A 300-amino-acid chain; its full sequence is Acetylglutamate kinase (300 aa).

Substrate is bound by residues 73 to 74 (GG), arginine 95, and asparagine 197.

It belongs to the acetylglutamate kinase family. ArgB subfamily.

It localises to the cytoplasm. It carries out the reaction N-acetyl-L-glutamate + ATP = N-acetyl-L-glutamyl 5-phosphate + ADP. It participates in amino-acid biosynthesis; L-arginine biosynthesis; N(2)-acetyl-L-ornithine from L-glutamate: step 2/4. Catalyzes the ATP-dependent phosphorylation of N-acetyl-L-glutamate. The chain is Acetylglutamate kinase from Polynucleobacter asymbioticus (strain DSM 18221 / CIP 109841 / QLW-P1DMWA-1) (Polynucleobacter necessarius subsp. asymbioticus).